The chain runs to 279 residues: MGIRKYKPTTPGRRGSSVADFAEITRSTPEKSLLRPLHKTGGRNNSGKITTRHKGGGHKRQYRLIDFRRHDKDGINARVAEIEYDPNRTARIALLHYVDGTKRYIIAPNKLSQGDFVEAGPDADIKPGNNLPLRNIPVGTVIHAVELRPGGGAKMARSAGASVQLVAKEGRFAQLRLPSGEIRNVDVRCRATVGEVGNAEQSNINWGKAGRMRWKGVRPTVRGVAMNPVDHPHGGGEGKTSGGRHPVNPNGKPEGRTRRPNKESDKLIVRRRRTGKNKR.

Disordered regions lie at residues 29 to 59 (PEKSLLRPLHKTGGRNNSGKITTRHKGGGHK) and 224 to 279 (VAMN…KNKR). Over residues 50–59 (TTRHKGGGHK) the composition is skewed to basic residues. Positions 253–268 (PEGRTRRPNKESDKLI) are enriched in basic and acidic residues. The segment covering 269–279 (VRRRRTGKNKR) has biased composition (basic residues).

It belongs to the universal ribosomal protein uL2 family. In terms of assembly, part of the 50S ribosomal subunit. Forms a bridge to the 30S subunit in the 70S ribosome.

In terms of biological role, one of the primary rRNA binding proteins. Required for association of the 30S and 50S subunits to form the 70S ribosome, for tRNA binding and peptide bond formation. It has been suggested to have peptidyltransferase activity; this is somewhat controversial. Makes several contacts with the 16S rRNA in the 70S ribosome. The chain is Large ribosomal subunit protein uL2 from Paenarthrobacter aurescens (strain TC1).